The sequence spans 235 residues: Phosphoribosylaminoimidazole-succinocarboxamide synthase (235 aa).

This sequence belongs to the SAICAR synthetase family.

The catalysed reaction is 5-amino-1-(5-phospho-D-ribosyl)imidazole-4-carboxylate + L-aspartate + ATP = (2S)-2-[5-amino-1-(5-phospho-beta-D-ribosyl)imidazole-4-carboxamido]succinate + ADP + phosphate + 2 H(+). It functions in the pathway purine metabolism; IMP biosynthesis via de novo pathway; 5-amino-1-(5-phospho-D-ribosyl)imidazole-4-carboxamide from 5-amino-1-(5-phospho-D-ribosyl)imidazole-4-carboxylate: step 1/2. This chain is Phosphoribosylaminoimidazole-succinocarboxamide synthase, found in Streptococcus thermophilus (strain ATCC BAA-250 / LMG 18311).